The sequence spans 278 residues: Large ribosomal subunit protein uL2 (278 aa).

Disordered stretches follow at residues 33–57 and 224–278; these read LIRPLHGTGGRNAHGRITTRHKGGG and VVMN…GKKR. A compositionally biased stretch (basic residues) spans 45-57; it reads AHGRITTRHKGGG. Basic and acidic residues predominate over residues 253 to 268; sequence PEGRTRKPNKASDKLI. Basic residues predominate over residues 269–278; the sequence is VRRRRTGKKR.

This sequence belongs to the universal ribosomal protein uL2 family. Part of the 50S ribosomal subunit. Forms a bridge to the 30S subunit in the 70S ribosome.

In terms of biological role, one of the primary rRNA binding proteins. Required for association of the 30S and 50S subunits to form the 70S ribosome, for tRNA binding and peptide bond formation. It has been suggested to have peptidyltransferase activity; this is somewhat controversial. Makes several contacts with the 16S rRNA in the 70S ribosome. In Mycobacteroides abscessus (strain ATCC 19977 / DSM 44196 / CCUG 20993 / CIP 104536 / JCM 13569 / NCTC 13031 / TMC 1543 / L948) (Mycobacterium abscessus), this protein is Large ribosomal subunit protein uL2.